Here is a 144-residue protein sequence, read N- to C-terminus: D-aminoacyl-tRNA deacylase (144 aa).

The short motif at 136–137 (GP) is the Gly-cisPro motif, important for rejection of L-amino acids element.

The protein belongs to the DTD family. Homodimer.

It localises to the cytoplasm. The catalysed reaction is glycyl-tRNA(Ala) + H2O = tRNA(Ala) + glycine + H(+). It catalyses the reaction a D-aminoacyl-tRNA + H2O = a tRNA + a D-alpha-amino acid + H(+). Functionally, an aminoacyl-tRNA editing enzyme that deacylates mischarged D-aminoacyl-tRNAs. Also deacylates mischarged glycyl-tRNA(Ala), protecting cells against glycine mischarging by AlaRS. Acts via tRNA-based rather than protein-based catalysis; rejects L-amino acids rather than detecting D-amino acids in the active site. By recycling D-aminoacyl-tRNA to D-amino acids and free tRNA molecules, this enzyme counteracts the toxicity associated with the formation of D-aminoacyl-tRNA entities in vivo and helps enforce protein L-homochirality. The polypeptide is D-aminoacyl-tRNA deacylase (Pasteurella multocida (strain Pm70)).